The sequence spans 167 residues: Small heat shock protein C1 (167 aa).

Residues 59-167 (SLYESNSIKS…EQEAREIVID (109 aa)) enclose the sHSP domain.

The protein belongs to the small heat shock protein (HSP20) family.

The chain is Small heat shock protein C1 (hspC1) from Rickettsia conorii (strain ATCC VR-613 / Malish 7).